A 221-amino-acid polypeptide reads, in one-letter code: MSDGQARDLMAQRFRGFLPVVVDLETGGFNAQRDALLEIAAVTLTMDAQGNLMPDDTHAFHVRPFEGANIEQAALDFTGIDLDSPLRQQVALSEHDALGEIFKPVRKAIKANQCTRAILVGHNAAFDQGFLNAAVERNGIKRNPFHPFSCFDTATLGGLVYGQTVLARACRAAGIEFDNASAHSARYDTERTAELFCAMVNRYKNLGGWDLALKEQGMDED.

Residues 20–196 (VVVDLETGGF…YDTERTAELF (177 aa)) enclose the Exonuclease domain. Residues Asp23, Glu25, His183, and Asp188 each contribute to the Mg(2+) site. Catalysis depends on His183, which acts as the Proton donor/acceptor.

The protein belongs to the RNase T family. As to quaternary structure, homodimer. Requires Mg(2+) as cofactor.

In terms of biological role, trims short 3' overhangs of a variety of RNA species, leaving a one or two nucleotide 3' overhang. Responsible for the end-turnover of tRNA: specifically removes the terminal AMP residue from uncharged tRNA (tRNA-C-C-A). Also appears to be involved in tRNA biosynthesis. The sequence is that of Ribonuclease T from Chromohalobacter salexigens (strain ATCC BAA-138 / DSM 3043 / CIP 106854 / NCIMB 13768 / 1H11).